A 101-amino-acid polypeptide reads, in one-letter code: Phosphoribosyl-AMP cyclohydrolase (101 aa).

Residue Asp-71 coordinates Mg(2+). Position 72 (Cys-72) interacts with Zn(2+). Positions 73 and 75 each coordinate Mg(2+). Zn(2+) contacts are provided by Cys-88 and Cys-95.

This sequence belongs to the PRA-CH family. As to quaternary structure, homodimer. It depends on Mg(2+) as a cofactor. Zn(2+) serves as cofactor.

Its subcellular location is the cytoplasm. The catalysed reaction is 1-(5-phospho-beta-D-ribosyl)-5'-AMP + H2O = 1-(5-phospho-beta-D-ribosyl)-5-[(5-phospho-beta-D-ribosylamino)methylideneamino]imidazole-4-carboxamide. It participates in amino-acid biosynthesis; L-histidine biosynthesis; L-histidine from 5-phospho-alpha-D-ribose 1-diphosphate: step 3/9. Catalyzes the hydrolysis of the adenine ring of phosphoribosyl-AMP. The protein is Phosphoribosyl-AMP cyclohydrolase of Bacillus cytotoxicus (strain DSM 22905 / CIP 110041 / 391-98 / NVH 391-98).